Here is a 123-residue protein sequence, read N- to C-terminus: Small ribosomal subunit protein uS12 (123 aa).

The interval 1 to 32 (MPTINQLIRKPREAQKARDKAPALQSSPQKRG) is disordered. Basic and acidic residues predominate over residues 10–21 (KPREAQKARDKA). Position 89 is a 3-methylthioaspartic acid (Asp-89).

It belongs to the universal ribosomal protein uS12 family. Part of the 30S ribosomal subunit. Contacts proteins S8 and S17. May interact with IF1 in the 30S initiation complex.

With S4 and S5 plays an important role in translational accuracy. Its function is as follows. Interacts with and stabilizes bases of the 16S rRNA that are involved in tRNA selection in the A site and with the mRNA backbone. Located at the interface of the 30S and 50S subunits, it traverses the body of the 30S subunit contacting proteins on the other side and probably holding the rRNA structure together. The combined cluster of proteins S8, S12 and S17 appears to hold together the shoulder and platform of the 30S subunit. In Azorhizobium caulinodans (strain ATCC 43989 / DSM 5975 / JCM 20966 / LMG 6465 / NBRC 14845 / NCIMB 13405 / ORS 571), this protein is Small ribosomal subunit protein uS12.